The following is a 216-amino-acid chain: Cobalt-zinc-cadmium resistance protein CzcN (216 aa).

A run of 3 helical transmembrane segments spans residues 27 to 47 (IGVW…GHSR), 50 to 70 (GTWV…LATV), and 116 to 136 (ESLA…PAVI).

It to A.xylosoxydans NccN.

Its subcellular location is the cell inner membrane. In terms of biological role, component of the CZC cation-efflux system that confers resistance to cobalt, zinc and cadmium. This Cupriavidus metallidurans (strain ATCC 43123 / DSM 2839 / NBRC 102507 / CH34) (Ralstonia metallidurans) protein is Cobalt-zinc-cadmium resistance protein CzcN (czcN).